A 943-amino-acid polypeptide reads, in one-letter code: Leucine--tRNA ligase (943 aa).

Positions 40-51 (PYPSGAGLHVGH) match the 'HIGH' region motif. Positions 717-721 (KMSKS) match the 'KMSKS' region motif. Lys720 is an ATP binding site.

It belongs to the class-I aminoacyl-tRNA synthetase family.

It localises to the cytoplasm. It carries out the reaction tRNA(Leu) + L-leucine + ATP = L-leucyl-tRNA(Leu) + AMP + diphosphate. In Bacteroides fragilis (strain YCH46), this protein is Leucine--tRNA ligase.